The primary structure comprises 376 residues: N-acetyldiaminopimelate deacetylase (376 aa).

The active site involves aspartate 69. Glutamate 128 serves as the catalytic Proton acceptor.

Belongs to the peptidase M20A family. N-acetyldiaminopimelate deacetylase subfamily.

The enzyme catalyses N-acetyl-(2S,6S)-2,6-diaminopimelate + H2O = (2S,6S)-2,6-diaminopimelate + acetate. Its pathway is amino-acid biosynthesis; L-lysine biosynthesis via DAP pathway; LL-2,6-diaminopimelate from (S)-tetrahydrodipicolinate (acetylase route): step 3/3. In terms of biological role, catalyzes the conversion of N-acetyl-diaminopimelate to diaminopimelate and acetate. This Streptococcus pneumoniae (strain Taiwan19F-14) protein is N-acetyldiaminopimelate deacetylase.